A 359-amino-acid polypeptide reads, in one-letter code: 5-amino-6-(D-ribitylamino)uracil--L-tyrosine 4-hydroxyphenyl transferase (359 aa).

The region spanning 45 to 282 (VTYVVNANIN…TYAISRIFFK (238 aa)) is the Radical SAM core domain. The [4Fe-4S] cluster site is built by Cys-59, Cys-63, and Cys-66.

Belongs to the radical SAM superfamily. CofH family. In terms of assembly, consists of two subunits, CofG and CofH. The cofactor is [4Fe-4S] cluster.

It catalyses the reaction 5-amino-6-(D-ribitylamino)uracil + L-tyrosine + S-adenosyl-L-methionine = 5-amino-5-(4-hydroxybenzyl)-6-(D-ribitylimino)-5,6-dihydrouracil + 2-iminoacetate + 5'-deoxyadenosine + L-methionine + H(+). It participates in cofactor biosynthesis; coenzyme F0 biosynthesis. In terms of biological role, catalyzes the radical-mediated synthesis of 5-amino-5-(4-hydroxybenzyl)-6-(D-ribitylimino)-5,6-dihydrouracil from 5-amino-6-(D-ribitylamino)uracil and L-tyrosine. This is 5-amino-6-(D-ribitylamino)uracil--L-tyrosine 4-hydroxyphenyl transferase from Methanococcus maripaludis (strain C5 / ATCC BAA-1333).